The chain runs to 238 residues: uncharacterized protein (238 aa).

3 consecutive transmembrane segments (helical) span residues 75 to 95 (YAIF…HNFY), 116 to 136 (IVLI…FSLI), and 172 to 192 (IQGL…LEVI). The interval 200 to 238 (DVEMSSMRGQAITTEPASDNTMAEETDCNTSKDVESGSN) is disordered. Polar residues predominate over residues 206–220 (MRGQAITTEPASDNT). The segment covering 229-238 (TSKDVESGSN) has biased composition (basic and acidic residues).

It localises to the membrane. This is an uncharacterized protein from Schizosaccharomyces pombe (strain 972 / ATCC 24843) (Fission yeast).